A 169-amino-acid chain; its full sequence is MGWSQDLFRALWRSLSREVKEHVGTDQFGNKYYYIPQYKNWRGQTIREKRIVEAANKKEVDYEAGDIPTEWEAWIRRTRKTPPTMEEILKNEKHREEIKIKSQDFYEKEKLLSKETSEELLPPPVQTQIKGHASAPYFGKEEPSVAPSSTGKTFQPGSWMPRDGKSHNQ.

The segment at 116 to 169 is disordered; sequence TSEELLPPPVQTQIKGHASAPYFGKEEPSVAPSSTGKTFQPGSWMPRDGKSHNQ. Serine 134 is subject to Phosphoserine. Positions 146–156 are enriched in polar residues; that stretch reads APSSTGKTFQP.

It belongs to the complex I NDUFA12 subunit family. In terms of assembly, interacts with ARMC9. In terms of tissue distribution, highly expressed in ESCC cells. Also expressed in heart, skeletal muscle, liver, and in fibroblasts.

It localises to the mitochondrion. Its function is as follows. Acts as a molecular chaperone for mitochondrial complex I assembly. Complex I functions in the transfer of electrons from NADH to the respiratory chain. The immediate electron acceptor for the enzyme is believed to be ubiquinone. Is involved in the initial steps of cilia formation, including removal of CP110 from the mother centrioles, docking of membrane vesicles to the mother centrioles, and establishment of the transition zone. This chain is NADH dehydrogenase [ubiquinone] 1 alpha subcomplex assembly factor 2 (NDUFAF2), found in Homo sapiens (Human).